The following is a 297-amino-acid chain: Bilin biosynthesis protein MpeU (297 aa).

The protein belongs to the CpcE/RpcE/PecE family.

Its function is as follows. An enzyme involved in the biosynthesis of bilin. In Synechococcus sp. (strain WH8020), this protein is Bilin biosynthesis protein MpeU (mpeU).